Consider the following 124-residue polypeptide: Ubiquitin-related modifier 1 (124 aa).

Residues 34–53 (IPSLVPKDNTTSAKNPPPKD) are disordered. Residue G124 is modified to 1-thioglycine. A Glycyl lysine isopeptide (Gly-Lys) (interchain with K-? in acceptor proteins) cross-link involves residue G124.

It belongs to the URM1 family. C-terminal thiocarboxylation occurs in 2 steps, it is first acyl-adenylated (-COAMP) via the hesA/moeB/thiF part of UBA4, then thiocarboxylated (-COSH) via the rhodanese domain of UBA4.

The protein resides in the cytoplasm. It participates in tRNA modification; 5-methoxycarbonylmethyl-2-thiouridine-tRNA biosynthesis. Its function is as follows. Acts as a sulfur carrier required for 2-thiolation of mcm(5)S(2)U at tRNA wobble positions of cytosolic tRNA(Lys), tRNA(Glu) and tRNA(Gln). Serves as sulfur donor in tRNA 2-thiolation reaction by being thiocarboxylated (-COSH) at its C-terminus by the MOCS3 homolog UBA4. The sulfur is then transferred to tRNA to form 2-thiolation of mcm(5)S(2)U. Prior mcm(5) tRNA modification by the elongator complex is required for 2-thiolation. Also acts as a ubiquitin-like protein (UBL) that is covalently conjugated via an isopeptide bond to lysine residues of target proteins such as AHP1. The thiocarboxylated form serves as substrate for conjugation and oxidative stress specifically induces the formation of UBL-protein conjugates. This Coprinopsis cinerea (strain Okayama-7 / 130 / ATCC MYA-4618 / FGSC 9003) (Inky cap fungus) protein is Ubiquitin-related modifier 1.